Here is a 334-residue protein sequence, read N- to C-terminus: Probable fructose-bisphosphate aldolase class 1 (334 aa).

The protein belongs to the class I fructose-bisphosphate aldolase family.

The enzyme catalyses beta-D-fructose 1,6-bisphosphate = D-glyceraldehyde 3-phosphate + dihydroxyacetone phosphate. It functions in the pathway carbohydrate degradation; glycolysis; D-glyceraldehyde 3-phosphate and glycerone phosphate from D-glucose: step 4/4. In Xylella fastidiosa (strain 9a5c), this protein is Probable fructose-bisphosphate aldolase class 1.